The chain runs to 595 residues: Elongation factor 4 (595 aa).

The region spanning 2-184 is the tr-type G domain; the sequence is SHIRNFSIIA…RLVATIPAPT (183 aa). Residues 14 to 19 and 131 to 134 contribute to the GTP site; these read DHGKST and NKMD.

It belongs to the TRAFAC class translation factor GTPase superfamily. Classic translation factor GTPase family. LepA subfamily.

Its subcellular location is the cell inner membrane. It carries out the reaction GTP + H2O = GDP + phosphate + H(+). Required for accurate and efficient protein synthesis under certain stress conditions. May act as a fidelity factor of the translation reaction, by catalyzing a one-codon backward translocation of tRNAs on improperly translocated ribosomes. Back-translocation proceeds from a post-translocation (POST) complex to a pre-translocation (PRE) complex, thus giving elongation factor G a second chance to translocate the tRNAs correctly. Binds to ribosomes in a GTP-dependent manner. This chain is Elongation factor 4, found in Pseudomonas savastanoi pv. phaseolicola (strain 1448A / Race 6) (Pseudomonas syringae pv. phaseolicola (strain 1448A / Race 6)).